The chain runs to 189 residues: uncharacterized protein (189 aa).

A signal peptide spans 1-23 (MIKTTPHKIVILMGILLSPSVFA). The disordered stretch occupies residues 104 to 125 (SSPKLIIPQSGDSSSTTSNIGM). The segment covering 113 to 123 (SGDSSSTTSNI) has biased composition (polar residues).

The protein belongs to the fimbrial protein family.

The protein localises to the fimbrium. Its function is as follows. Part of the yadCKLM-htrE-yadVN fimbrial operon. Could contribute to adhesion to various surfaces in specific environmental niches. This is an uncharacterized protein from Escherichia coli (strain K12).